Reading from the N-terminus, the 761-residue chain is Polyribonucleotide nucleotidyltransferase (761 aa).

Mg(2+) contacts are provided by D532 and D538. Positions 598–657 (PRVISVQIPVDKIGELIGPKGKTINAIQDETGADISIDEDGTVYIGAVDGPSAEAARAQV) constitute a KH domain. The region spanning 669 to 741 (GEQFLGTVVK…DRGKLSLAPV (73 aa)) is the S1 motif domain.

It belongs to the polyribonucleotide nucleotidyltransferase family. Mg(2+) is required as a cofactor.

The protein resides in the cytoplasm. The enzyme catalyses RNA(n+1) + phosphate = RNA(n) + a ribonucleoside 5'-diphosphate. Involved in mRNA degradation. Catalyzes the phosphorolysis of single-stranded polyribonucleotides processively in the 3'- to 5'-direction. The chain is Polyribonucleotide nucleotidyltransferase from Leifsonia xyli subsp. xyli (strain CTCB07).